The chain runs to 82 residues: ATP synthase subunit c (82 aa).

Helical transmembrane passes span 7 to 27 (LVALACGLIVGLGAIGASIGI) and 53 to 73 (FILAGLIDAAFLIGVAIALLF).

Belongs to the ATPase C chain family. In terms of assembly, F-type ATPases have 2 components, F(1) - the catalytic core - and F(0) - the membrane proton channel. F(1) has five subunits: alpha(3), beta(3), gamma(1), delta(1), epsilon(1). F(0) has three main subunits: a(1), b(2) and c(10-14). The alpha and beta chains form an alternating ring which encloses part of the gamma chain. F(1) is attached to F(0) by a central stalk formed by the gamma and epsilon chains, while a peripheral stalk is formed by the delta and b chains.

Its subcellular location is the cell inner membrane. F(1)F(0) ATP synthase produces ATP from ADP in the presence of a proton or sodium gradient. F-type ATPases consist of two structural domains, F(1) containing the extramembraneous catalytic core and F(0) containing the membrane proton channel, linked together by a central stalk and a peripheral stalk. During catalysis, ATP synthesis in the catalytic domain of F(1) is coupled via a rotary mechanism of the central stalk subunits to proton translocation. Its function is as follows. Key component of the F(0) channel; it plays a direct role in translocation across the membrane. A homomeric c-ring of between 10-14 subunits forms the central stalk rotor element with the F(1) delta and epsilon subunits. This Acidovorax ebreus (strain TPSY) (Diaphorobacter sp. (strain TPSY)) protein is ATP synthase subunit c.